The chain runs to 438 residues: tRNA modification GTPase MnmE (438 aa).

(6S)-5-formyl-5,6,7,8-tetrahydrofolate is bound by residues R20, E76, and K115. Residues 210–370 (NFTIMILGRR…LKCFINKIVD (161 aa)) form the TrmE-type G domain. N220 contacts K(+). GTP is bound by residues 220-225 (NVGKST), 239-245 (TNIPGTT), and 264-267 (DTAG). S224 is a binding site for Mg(2+). K(+) contacts are provided by T239, I241, and T244. T245 is a binding site for Mg(2+). K438 is a binding site for (6S)-5-formyl-5,6,7,8-tetrahydrofolate.

The protein belongs to the TRAFAC class TrmE-Era-EngA-EngB-Septin-like GTPase superfamily. TrmE GTPase family. In terms of assembly, homodimer. Heterotetramer of two MnmE and two MnmG subunits. The cofactor is K(+).

Its subcellular location is the cytoplasm. Its function is as follows. Exhibits a very high intrinsic GTPase hydrolysis rate. Involved in the addition of a carboxymethylaminomethyl (cmnm) group at the wobble position (U34) of certain tRNAs, forming tRNA-cmnm(5)s(2)U34. In Carsonella ruddii (strain PV), this protein is tRNA modification GTPase MnmE.